The chain runs to 295 residues: 33 kDa chaperonin (295 aa).

2 disulfide bridges follow: C237–C239 and C270–C273.

It belongs to the HSP33 family. Under oxidizing conditions two disulfide bonds are formed involving the reactive cysteines. Under reducing conditions zinc is bound to the reactive cysteines and the protein is inactive.

The protein resides in the cytoplasm. Redox regulated molecular chaperone. Protects both thermally unfolding and oxidatively damaged proteins from irreversible aggregation. Plays an important role in the bacterial defense system toward oxidative stress. The chain is 33 kDa chaperonin from Geobacillus sp. (strain WCH70).